Here is a 440-residue protein sequence, read N- to C-terminus: Xaa-Pro dipeptidase (440 aa).

Mn(2+)-binding residues include D244, D255, H335, E380, and E419.

The protein belongs to the peptidase M24B family. Bacterial-type prolidase subfamily. Mn(2+) serves as cofactor.

It carries out the reaction Xaa-L-Pro dipeptide + H2O = an L-alpha-amino acid + L-proline. Its function is as follows. Splits dipeptides with a prolyl residue in the C-terminal position. In Shewanella halifaxensis (strain HAW-EB4), this protein is Xaa-Pro dipeptidase.